The following is a 181-amino-acid chain: ATP synthase subunit delta (181 aa).

Belongs to the ATPase delta chain family. As to quaternary structure, F-type ATPases have 2 components, F(1) - the catalytic core - and F(0) - the membrane proton channel. F(1) has five subunits: alpha(3), beta(3), gamma(1), delta(1), epsilon(1). F(0) has three main subunits: a(1), b(2) and c(10-14). The alpha and beta chains form an alternating ring which encloses part of the gamma chain. F(1) is attached to F(0) by a central stalk formed by the gamma and epsilon chains, while a peripheral stalk is formed by the delta and b chains.

Its subcellular location is the cell membrane. Functionally, f(1)F(0) ATP synthase produces ATP from ADP in the presence of a proton or sodium gradient. F-type ATPases consist of two structural domains, F(1) containing the extramembraneous catalytic core and F(0) containing the membrane proton channel, linked together by a central stalk and a peripheral stalk. During catalysis, ATP synthesis in the catalytic domain of F(1) is coupled via a rotary mechanism of the central stalk subunits to proton translocation. In terms of biological role, this protein is part of the stalk that links CF(0) to CF(1). It either transmits conformational changes from CF(0) to CF(1) or is implicated in proton conduction. This chain is ATP synthase subunit delta, found in Shouchella clausii (strain KSM-K16) (Alkalihalobacillus clausii).